We begin with the raw amino-acid sequence, 4652 residues long: Low-density lipoprotein receptor-related protein 2 (4652 aa).

A signal peptide spans 1–25; the sequence is MERWAAAAACTLLLAFAACLAPASG. At 26-4422 the chain is on the extracellular side; that stretch reads RECLGNEFRC…SKGISPGTTV (4397 aa). LDL-receptor class A domains are found at residues 27-63, 66-104, 108-144, 142-181, 183-219, 223-259, and 267-308; these read ECLGNEFRCSNGHCITESWRCDGTRDCLDGSDEIGCP, TCGSTQFHCENEDVCIPLYWVCDGEEDCSNGADEHQRCP, TCSSHHFTCTNGECIPVEYRCDHSTDCLDGTDEINCR, NCRYPVCQQQTCHNGACYNTSQRCDGEIDCRDASDELNCT, RCLRNEFQCGSGECIPRDYVCDHDPDCSDSSDEHSCS, PCKGNEFACSNGFCINQNWVCDGMADCLDNSDEDGCE, and ECYP…RVCD. Cystine bridges form between Cys28-Cys40, Cys35-Cys53, Cys47-Cys62, Cys67-Cys80, Cys74-Cys93, Cys87-Cys103, Cys109-Cys121, Cys116-Cys134, Cys128-Cys143, Cys143-Cys158, Cys153-Cys171, Cys165-Cys180, Cys184-Cys196, Cys191-Cys209, Cys203-Cys218, Cys224-Cys236, Cys231-Cys249, Cys243-Cys258, Cys268-Cys281, Cys275-Cys294, and Cys288-Cys307. Asn160 and Asn179 each carry an N-linked (GlcNAc...) asparagine glycan. Asn341 carries N-linked (GlcNAc...) asparagine glycosylation. Residues 348 to 386 enclose the EGF-like 1; calcium-binding domain; it reads DFNDCQIWGICDHFCEDRIGHHQCFCAEGYVLEHEQHCR. 3 disulfides stabilise this stretch: Cys352-Cys362, Cys358-Cys371, and Cys373-Cys385. Asn388 carries N-linked (GlcNAc...) asparagine glycosylation. LDL-receptor class B repeat units follow at residues 436–478, 479–521, 522–568, 569–613, 753–795, 796–837, 838–881, and 882–925; these read SKVF…DWIN, NKLY…DPTV, GYLF…DLVA, KRVY…FEDN, NAIF…DWIS, RNLY…HPIA, GYIF…DWGS, and SRLY…FGEY. The N-linked (GlcNAc...) asparagine glycan is linked to Asn771. A glycan (N-linked (GlcNAc...) asparagine) is linked at Asn866. An N-linked (GlcNAc...) asparagine glycan is attached at Asn1015. Positions 1025-1061 constitute an LDL-receptor class A 8 domain; sequence QCGALSFPCNNGRCVPLHYRCDGVDDCHDNSDEVQCG. Intrachain disulfides connect Cys1026/Cys1038, Cys1033/Cys1051, and Cys1045/Cys1060. Asn1064 is a glycosylation site (N-linked (GlcNAc...) asparagine). LDL-receptor class A domains follow at residues 1066–1104, 1110–1146, 1150–1186, 1188–1225, 1231–1269, 1272–1308, and 1313–1351; these read SCAPSAFACGHGGGECIPSYWRCDNHNDCVDGSDEQNCS, SCRADYFTCDNHMCIPKNWLCDTDNDCGDGSDEKRCD, TCSPTQFHCPNHRCIDLAFVCDGDKDCADGSDESACV, NCTDSQFKCVGSNKCISNTYRCDGVSDCSDHSDEIDCP, MCRQDEFQCREDGICIPDSWECDGHPDCLTGSDEHSGCP, TCPXSRFLCANGNCIFRDWLCDGDNDCRDMSDEKDCP, and LCPSWQWQCPGHSICVNLSSVCDGISDCPHGTDESPLCN. Disulfide bonds link Cys1067–Cys1081, Cys1074–Cys1094, Cys1088–Cys1103, Cys1111–Cys1123, Cys1118–Cys1136, Cys1130–Cys1145, Cys1151–Cys1163, Cys1158–Cys1176, and Cys1170–Cys1185. A glycan (N-linked (GlcNAc...) asparagine) is linked at Asn1102. Ca(2+) contacts are provided by Trp1128, Asp1131, Asp1133, Asp1135, Asp1141, and Glu1142. The N-linked (GlcNAc...) asparagine glycan is linked to Asn1188. 12 disulfide bridges follow: Cys1189-Cys1202, Cys1196-Cys1215, Cys1209-Cys1224, Cys1232-Cys1245, Cys1239-Cys1258, Cys1252-Cys1268, Cys1273-Cys1285, Cys1280-Cys1298, Cys1292-Cys1307, Cys1314-Cys1327, Cys1321-Cys1340, and Cys1334-Cys1350. Tyr1207, Asp1210, Val1212, Asp1214, Asp1220, and Glu1221 together coordinate Ca(2+). Asn1329 carries an N-linked (GlcNAc...) asparagine glycan. Asn1385, Asn1452, Asn1498, and Asn1552 each carry an N-linked (GlcNAc...) asparagine glycan. LDL-receptor class B repeat units follow at residues 1480-1522, 1523-1565, 1568-1611, 1612-1654, 1655-1696, 1789-1831, 1832-1881, 1882-1929, 1930-1971, and 1972-2012; these read GRIF…DWVG, RNLY…DPRV, RVIF…DYPT, RLLY…TIFE, DSIY…VHPA, QFLY…DWLS, RNLY…DPAK, GKLY…DIQE, QKLY…YGPY, and LYYA…YRRR. 2 N-linked (GlcNAc...) asparagine glycosylation sites follow: Asn1677 and Asn1809. Residue Asn2053 is glycosylated (N-linked (GlcNAc...) asparagine). LDL-receptor class B repeat units follow at residues 2105–2154, 2155–2199, 2200–2243, 2244–2287, 2429–2475, 2476–2516, 2517–2560, 2561–2602, and 2603–2644; these read GFVY…DWVA, GNLY…DPKN, RYLF…DHNS, GYIY…FGNS, NRIY…DWIG, RRIY…DPCQ, GYMY…DYKE, NLLY…YGQY, and IYWT…VVNN. Asn2175 and Asn2222 each carry an N-linked (GlcNAc...) asparagine glycan. Asn2485 is a glycosylation site (N-linked (GlcNAc...) asparagine). 10 LDL-receptor class A domains span residues 2696 to 2734, 2737 to 2773, 2776 to 2815, 2818 to 2857, 2860 to 2897, 2902 to 2941, 2944 to 2986, 2989 to 3025, 3028 to 3066, and 3071 to 3107; these read RCNSTQFTCLSGYCILESLKCNDIDECGDSSDELETLCA, TCPPTSFTCANGRCIQRHFRCDHYNDCGDNSDESGCR, SCNITTEFSCNNGKCLPLQLVCDGIDHCNDNNTSDEKNCA, TCLPDYIKCANSNVCIPRLFLCDGDNDCGDMSDENPIYCV, TCKNNEFQCTSGSCIPELWHCDGERDCDDGSDEPATCV, TCSSDEFKCDNNRCIQMEWICDGDNDCGDMSDEDGRHHCE, NCSS…QNCT, NCSGTEFRCSNGLCIPNWFRCDRRNDCGDYSDERNCK, ACDENLFTCQNGICTYKSYICDGENDCGDNSDELEHLCH, and TCPPHQFRCNNGNCIEMVKVCNHQADCSDNSDEERCG. Intrachain disulfides connect Cys2697/Cys2709, Cys2704/Cys2722, Cys2716/Cys2733, Cys2738/Cys2750, Cys2745/Cys2763, Cys2757/Cys2772, Cys2777/Cys2790, Cys2785/Cys2803, Cys2797/Cys2814, Cys2819/Cys2832, Cys2826/Cys2845, Cys2839/Cys2856, Cys2861/Cys2873, Cys2868/Cys2886, Cys2880/Cys2896, Cys2903/Cys2915, Cys2910/Cys2928, and Cys2922/Cys2940. An N-linked (GlcNAc...) asparagine glycan is attached at Asn2698. An N-linked (GlcNAc...) asparagine glycan is attached at Asn2778. Residues Asn2806 and Asn2807 are each glycosylated (N-linked (GlcNAc...) asparagine). Asn2944 carries an N-linked (GlcNAc...) asparagine glycan. 3 disulfides stabilise this stretch: Cys2945-Cys2962, Cys2952-Cys2975, and Cys2969-Cys2985. N-linked (GlcNAc...) asparagine glycans are attached at residues Asn2984 and Asn2989. 9 cysteine pairs are disulfide-bonded: Cys2990–Cys3002, Cys2997–Cys3015, Cys3009–Cys3024, Cys3029–Cys3041, Cys3036–Cys3054, Cys3048–Cys3065, Cys3072–Cys3084, Cys3079–Cys3097, and Cys3091–Cys3106. Asn3122 is a glycosylation site (N-linked (GlcNAc...) asparagine). Positions 3149–3189 constitute an EGF-like 2; calcium-binding domain; it reads DIDECKETPSVCSQKCENLLGSYICKCAPGYTREPDGRSCR. Cystine bridges form between Cys3153-Cys3164, Cys3160-Cys3173, and Cys3175-Cys3188. Asn3208, Asn3254, Asn3312, and Asn3352 each carry an N-linked (GlcNAc...) asparagine glycan. 5 LDL-receptor class B repeats span residues 3236-3278, 3279-3321, 3330-3373, 3374-3417, and 3418-3458; these read ERLY…DWVT, RKLY…DKPR, GYVY…DYTN, DLLY…FEDT, and IYWT…YHPY. Asn3435 and Asn3444 each carry an N-linked (GlcNAc...) asparagine glycan. LDL-receptor class A domains lie at 3509 to 3547, 3550 to 3588, 3591 to 3629, 3632 to 3670, 3675 to 3713, 3716 to 3753, 3756 to 3792, 3795 to 3831, and 3839 to 3877; these read MCSSTQFLCANNEMCIPIWWKCDGQKDCLDGSDEPNTCP, FCRLGQFQCSDGNCTSSNFICNARQDCPDGSDEDAVLCE, RCESNQWQCANKRCIPESWQCDSLNDCGDNSDEDSSHCA, TCLPGYFKCANGHCIPQSWKCDVDNDCGDYSDEPLQECM, RCDNYTEFDCKTNYRCIPKWAVCNGFDDCRDNSDEQNCE, TCKPSGEFRCTNHHCIPLRWRCDGHNDCGDNSDEENCV, QCSESEFRCDDQTCIPSRWICDQNNDCGDNSDERDCE, TCHPGYFQCSSGHCIPDQMRCDGFADCLDASDEATCP, and YCPATLFECKNHVCVQPSWKCDGDNDCGDGSDEELHLCL. 27 disulfide bridges follow: Cys3510-Cys3523, Cys3517-Cys3536, Cys3530-Cys3546, Cys3551-Cys3563, Cys3558-Cys3576, Cys3570-Cys3587, Cys3592-Cys3604, Cys3599-Cys3617, Cys3611-Cys3628, Cys3633-Cys3645, Cys3640-Cys3658, Cys3652-Cys3669, Cys3676-Cys3690, Cys3684-Cys3703, Cys3697-Cys3712, Cys3717-Cys3730, Cys3725-Cys3743, Cys3737-Cys3752, Cys3757-Cys3769, Cys3764-Cys3782, Cys3776-Cys3791, Cys3796-Cys3808, Cys3803-Cys3821, Cys3815-Cys3830, Cys3840-Cys3852, Cys3847-Cys3865, and Cys3859-Cys3876. N-linked (GlcNAc...) asparagine glycosylation occurs at Asn3562. N-linked (GlcNAc...) asparagine glycosylation occurs at Asn3678. N-linked (GlcNAc...) asparagine glycosylation occurs at Asn3878. 2 consecutive LDL-receptor class A domains span residues 3880 to 3919 and 3925 to 3961; these read TCDLTNRFRCDNNRCIYRHELCNHEDDCGDGSDEKKENCL and PCTEGEFKCSNGHCISQHLVCDDVDDCGDHFDETGCN. 12 disulfide bridges follow: Cys3881-Cys3894, Cys3889-Cys3907, Cys3901-Cys3918, Cys3926-Cys3938, Cys3933-Cys3951, Cys3945-Cys3960, Cys3968-Cys3977, Cys3973-Cys3987, Cys3989-Cys4003, Cys4009-Cys4019, Cys4015-Cys4028, and Cys4030-Cys4045. In terms of domain architecture, EGF-like 3 spans 3964–4004; it reads EERSCAENLCEHNCTQLIGGGFICSCRPGFKASSLNRNSCE. Asn3976 is a glycosylation site (N-linked (GlcNAc...) asparagine). Residues 4005–4046 enclose the EGF-like 4; calcium-binding domain; sequence DINECEQFGVCPQNCHNTKGSYECTCAEGFRSMSEHYGERCA. Residue Asn4066 is glycosylated (N-linked (GlcNAc...) asparagine). 3 LDL-receptor class B repeats span residues 4152–4194, 4195–4238, and 4240–4281; these read RHIY…NPKQ, GLMY…DYVN, and DRIY…FESQ. N-linked (GlcNAc...) asparagine glycosylation is present at Asn4325. An EGF-like 5 domain is found at 4375–4409; sequence MPPPCRCMNEGNCYFDKNNLPKCKCPSGYMGEYCE. Intrachain disulfides connect Cys4379–Cys4387, Cys4381–Cys4397, and Cys4399–Cys4408. A helical membrane pass occupies residues 4423-4443; that stretch reads AVLVTLILIIIIGGLVALGFF. The Cytoplasmic portion of the chain corresponds to 4444–4652; sequence HYRKTGSILI…ANLVREDSEA (209 aa). An SH3-binding motif is present at residues 4450–4459; the sequence is SILISMPRLP. Positions 4453–4458 match the PxLPxI/L motif 1; mediates interaction with ANKRA2 motif; sequence ISMPRL. The PxLPxI/L motif 2; mediates interaction with ANKRA2 motif lies at 4456 to 4461; that stretch reads PRLPSL. Residue Ser4460 is modified to Phosphoserine. An Endocytosis signal motif is present at residues 4518 to 4523; it reads FENPMY. Residues 4536–4553 show a composition bias toward polar residues; that stretch reads TTTQVSESGNVYNKNYGS. Residues 4536-4652 form a disordered region; it reads TTTQVSESGN…ANLVREDSEA (117 aa). Ser4568 is subject to Phosphoserine. Residues 4588-4601 are interaction with DAB2; that stretch reads QNTNFENPIYAETE. An NPXY motif motif is present at residues 4594–4597; that stretch reads NPIY. The short motif at 4597-4600 is the SH2-binding element; sequence YAET. Positions 4610–4621 match the SH3-binding motif; the sequence is VTPPPSPSPPAK. At Ser4615 the chain carries Phosphoserine. The span at 4626 to 4636 shows a compositional bias: polar residues; sequence KGTTPAYSATE. The residue at position 4629 (Thr4629) is a Phosphothreonine. Ser4650 is modified (phosphoserine).

It belongs to the LDLR family. As to quaternary structure, binds plasminogen, extracellular matrix components, plasminogen activator-plasminogen activator inhibitor type I complex, apolipoprotein E-enriched beta-VLDL, lipoprotein lipase, lactoferrin, CLU/clusterin and calcium. Forms a multimeric complex together with LRPAP1. Interacts (via PxLPxI/L motif) with ANKRA2 (via ankyrin repeats). Interacts with LRP2BP. Interacts (via NPXY motif) with DAB2; the interaction is not affected by tyrosine phosphorylation of the NPXY motif. Interacts with MB. Interacts with BMP4. Interacts with the Sonic hedgehog protein N-product which is the active product of SHH. Interacts with CST3 in a calcium-dependent manner. Interacts with the vitamin-D binding protein GC/DBP. Interacts with sex hormone-binding protein SHBG. Interacts with angiotensin-2. Also interacts with angiotensin 1-7. Interacts with APOM. Interacts with selenoprotein SEPP1. Interacts with LEP. Interacts with ALB. Interacts with the antiapoptotic protein BIRC5/survivin. Interacts with matrix metalloproteinase MMP2 in complex with metalloproteinase inhibitor TIMP1. In neurons, forms a trimeric complex with APP and APPB1/FE65. Interacts with LDLRAP1/ARH; mediates trafficking of LRP2 to the endocytic recycling compartment. Does not interact with beta-amyloid protein 40 alone but interacts with the complex composed of beta-amyloid protein 40 and CLU/APOJ. Interacts with MDK. Post-translationally, a fraction undergoes proteolytic cleavage of the extracellular domain at the cell membrane to generate a cytoplasmic tail fragment. This is internalized into the early endosome from where it trafficks in an LDLRAP1/ARH-dependent manner to the endocytic recycling compartment (ERC). In the ERC, it is further cleaved by gamma-secretase to release a fragment which translocates to the nucleus and mediates transcriptional repression. N-glycosylation is required for ligand binding.

It localises to the apical cell membrane. The protein localises to the endosome lumen. The protein resides in the membrane. Its subcellular location is the clathrin-coated pit. It is found in the cell projection. It localises to the dendrite. The protein localises to the axon. In terms of biological role, multiligand endocytic receptor. Acts together with CUBN to mediate endocytosis of high-density lipoproteins. Mediates receptor-mediated uptake of polybasic drugs such as aprotinin, aminoglycosides and polymyxin B. In the kidney, mediates the tubular uptake and clearance of leptin. Also mediates transport of leptin across the blood-brain barrier through endocytosis at the choroid plexus epithelium. Endocytosis of leptin in neuronal cells is required for hypothalamic leptin signaling and leptin-mediated regulation of feeding and body weight. Mediates endocytosis and subsequent lysosomal degradation of CST3 in kidney proximal tubule cells. Mediates renal uptake of 25-hydroxyvitamin D3 in complex with the vitamin D3 transporter GC/DBP. Mediates renal uptake of metallothionein-bound heavy metals. Together with CUBN, mediates renal reabsorption of myoglobin. Mediates renal uptake and subsequent lysosomal degradation of APOM. Plays a role in kidney selenium homeostasis by mediating renal endocytosis of selenoprotein SEPP1. Mediates renal uptake of the antiapoptotic protein BIRC5/survivin which may be important for functional integrity of the kidney. Mediates renal uptake of matrix metalloproteinase MMP2 in complex with metalloproteinase inhibitor TIMP1. Mediates endocytosis of Sonic hedgehog protein N-product (ShhN), the active product of SHH. Also mediates ShhN transcytosis. In the embryonic neuroepithelium, mediates endocytic uptake and degradation of BMP4, is required for correct SHH localization in the ventral neural tube and plays a role in patterning of the ventral telencephalon. Required at the onset of neurulation to sequester SHH on the apical surface of neuroepithelial cells of the rostral diencephalon ventral midline and to control PTCH1-dependent uptake and intracellular trafficking of SHH. During neurulation, required in neuroepithelial cells for uptake of folate bound to the folate receptor FOLR1 which is necessary for neural tube closure. In the adult brain, negatively regulates BMP signaling in the subependymal zone which enables neurogenesis to proceed. In astrocytes, mediates endocytosis of ALB which is required for the synthesis of the neurotrophic factor oleic acid. Involved in neurite branching. During optic nerve development, required for SHH-mediated migration and proliferation of oligodendrocyte precursor cells. Mediates endocytic uptake and clearance of SHH in the retinal margin which protects retinal progenitor cells from mitogenic stimuli and keeps them quiescent. Plays a role in reproductive organ development by mediating uptake in reproductive tissues of androgen and estrogen bound to the sex hormone binding protein SHBG. Mediates endocytosis of angiotensin-2. Also mediates endocytosis of angiotensis 1-7. Binds to the complex composed of beta-amyloid protein 40 and CLU/APOJ and mediates its endocytosis and lysosomal degradation. Required for embryonic heart development. Required for normal hearing, possibly through interaction with estrogen in the inner ear. The chain is Low-density lipoprotein receptor-related protein 2 from Sus scrofa (Pig).